The chain runs to 296 residues: Ribosomal RNA small subunit methyltransferase H (296 aa).

S-adenosyl-L-methionine-binding positions include 38 to 40, Glu-57, Phe-80, Asp-103, and His-110; that span reads GVH.

It belongs to the methyltransferase superfamily. RsmH family.

It is found in the cytoplasm. The enzyme catalyses cytidine(1402) in 16S rRNA + S-adenosyl-L-methionine = N(4)-methylcytidine(1402) in 16S rRNA + S-adenosyl-L-homocysteine + H(+). Functionally, specifically methylates the N4 position of cytidine in position 1402 (C1402) of 16S rRNA. In Borreliella burgdorferi (strain ATCC 35210 / DSM 4680 / CIP 102532 / B31) (Borrelia burgdorferi), this protein is Ribosomal RNA small subunit methyltransferase H.